Reading from the N-terminus, the 226-residue chain is ATP synthase F(0) complex subunit a (226 aa).

The next 6 membrane-spanning stretches (helical) occupy residues 6–26 (FASF…IILF), 68–88 (WSLM…LGLL), 97–117 (QLSM…VMGF), 138–158 (IPML…ALAV), 164–184 (ITAG…LSTI), and 189–209 (ALII…VALI).

It belongs to the ATPase A chain family. Component of the ATP synthase complex composed at least of ATP5F1A/subunit alpha, ATP5F1B/subunit beta, ATP5MC1/subunit c (homooctomer), MT-ATP6/subunit a, MT-ATP8/subunit 8, ATP5ME/subunit e, ATP5MF/subunit f, ATP5MG/subunit g, ATP5MK/subunit k, ATP5MJ/subunit j, ATP5F1C/subunit gamma, ATP5F1D/subunit delta, ATP5F1E/subunit epsilon, ATP5PF/subunit F6, ATP5PB/subunit b, ATP5PD/subunit d, ATP5PO/subunit OSCP. ATP synthase complex consists of a soluble F(1) head domain (subunits alpha(3) and beta(3)) - the catalytic core - and a membrane F(0) domain - the membrane proton channel (subunits c, a, 8, e, f, g, k and j). These two domains are linked by a central stalk (subunits gamma, delta, and epsilon) rotating inside the F1 region and a stationary peripheral stalk (subunits F6, b, d, and OSCP). Interacts with DNAJC30; interaction is direct.

The protein localises to the mitochondrion inner membrane. It carries out the reaction H(+)(in) = H(+)(out). In terms of biological role, subunit a, of the mitochondrial membrane ATP synthase complex (F(1)F(0) ATP synthase or Complex V) that produces ATP from ADP in the presence of a proton gradient across the membrane which is generated by electron transport complexes of the respiratory chain. ATP synthase complex consist of a soluble F(1) head domain - the catalytic core - and a membrane F(1) domain - the membrane proton channel. These two domains are linked by a central stalk rotating inside the F(1) region and a stationary peripheral stalk. During catalysis, ATP synthesis in the catalytic domain of F(1) is coupled via a rotary mechanism of the central stalk subunits to proton translocation. With the subunit c (ATP5MC1), forms the proton-conducting channel in the F(0) domain, that contains two crucial half-channels (inlet and outlet) that facilitate proton movement from the mitochondrial intermembrane space (IMS) into the matrix. Protons are taken up via the inlet half-channel and released through the outlet half-channel, following a Grotthuss mechanism. In Pan troglodytes (Chimpanzee), this protein is ATP synthase F(0) complex subunit a.